The chain runs to 102 residues: NADH-quinone oxidoreductase subunit K (102 aa).

3 consecutive transmembrane segments (helical) span residues 5 to 25 (LGHF…GIFL), 31 to 51 (IVLL…FVAF), and 62 to 82 (IFVF…LAIL).

It belongs to the complex I subunit 4L family. In terms of assembly, NDH-1 is composed of 14 different subunits. Subunits NuoA, H, J, K, L, M, N constitute the membrane sector of the complex.

The protein resides in the cell inner membrane. It catalyses the reaction a quinone + NADH + 5 H(+)(in) = a quinol + NAD(+) + 4 H(+)(out). Functionally, NDH-1 shuttles electrons from NADH, via FMN and iron-sulfur (Fe-S) centers, to quinones in the respiratory chain. The immediate electron acceptor for the enzyme in this species is believed to be ubiquinone. Couples the redox reaction to proton translocation (for every two electrons transferred, four hydrogen ions are translocated across the cytoplasmic membrane), and thus conserves the redox energy in a proton gradient. The sequence is that of NADH-quinone oxidoreductase subunit K from Albidiferax ferrireducens (strain ATCC BAA-621 / DSM 15236 / T118) (Rhodoferax ferrireducens).